The sequence spans 300 residues: tRNA dimethylallyltransferase (300 aa).

8 to 15 (GASASGKS) lines the ATP pocket. 10 to 15 (SASGKS) serves as a coordination point for substrate. Residues 33 to 36 (DSLS) are interaction with substrate tRNA.

This sequence belongs to the IPP transferase family. In terms of assembly, monomer. Mg(2+) serves as cofactor.

It catalyses the reaction adenosine(37) in tRNA + dimethylallyl diphosphate = N(6)-dimethylallyladenosine(37) in tRNA + diphosphate. Functionally, catalyzes the transfer of a dimethylallyl group onto the adenine at position 37 in tRNAs that read codons beginning with uridine, leading to the formation of N6-(dimethylallyl)adenosine (i(6)A). This is tRNA dimethylallyltransferase from Wolinella succinogenes (strain ATCC 29543 / DSM 1740 / CCUG 13145 / JCM 31913 / LMG 7466 / NCTC 11488 / FDC 602W) (Vibrio succinogenes).